We begin with the raw amino-acid sequence, 89 residues long: Putative defensin-like protein 40 (89 aa).

The signal sequence occupies residues 1-26 (MAGIANGVGLLISFMLICGGMPKGHA). 4 cysteine pairs are disulfide-bonded: C33–C88, C46–C69, C55–C81, and C59–C83.

Belongs to the DEFL family.

It is found in the secreted. The polypeptide is Putative defensin-like protein 40 (Arabidopsis thaliana (Mouse-ear cress)).